The sequence spans 434 residues: Methylenetetrahydrofolate--tRNA-(uracil-5-)-methyltransferase TrmFO (434 aa).

9-14 is a binding site for FAD; sequence GAGLAG.

The protein belongs to the MnmG family. TrmFO subfamily. FAD serves as cofactor.

The protein localises to the cytoplasm. The catalysed reaction is uridine(54) in tRNA + (6R)-5,10-methylene-5,6,7,8-tetrahydrofolate + NADH + H(+) = 5-methyluridine(54) in tRNA + (6S)-5,6,7,8-tetrahydrofolate + NAD(+). It carries out the reaction uridine(54) in tRNA + (6R)-5,10-methylene-5,6,7,8-tetrahydrofolate + NADPH + H(+) = 5-methyluridine(54) in tRNA + (6S)-5,6,7,8-tetrahydrofolate + NADP(+). Catalyzes the folate-dependent formation of 5-methyl-uridine at position 54 (M-5-U54) in all tRNAs. The polypeptide is Methylenetetrahydrofolate--tRNA-(uracil-5-)-methyltransferase TrmFO (Listeria monocytogenes serotype 4b (strain F2365)).